The chain runs to 319 residues: Protoheme IX farnesyltransferase (319 aa).

Transmembrane regions (helical) follow at residues 59–79 (IGLI…AGAF), 108–128 (EALV…WFGA), 131–151 (LSAW…TIIL), 158–178 (NIVW…AAVT), 183–203 (WPAI…YWPL), 232–252 (VVLY…AGGA), 254–274 (WVYT…SHAL), and 299–319 (LTLL…VIGG).

It belongs to the UbiA prenyltransferase family. Protoheme IX farnesyltransferase subfamily.

The protein localises to the cell membrane. It catalyses the reaction heme b + (2E,6E)-farnesyl diphosphate + H2O = Fe(II)-heme o + diphosphate. It functions in the pathway porphyrin-containing compound metabolism; heme O biosynthesis; heme O from protoheme: step 1/1. In terms of biological role, converts heme B (protoheme IX) to heme O by substitution of the vinyl group on carbon 2 of heme B porphyrin ring with a hydroxyethyl farnesyl side group. The protein is Protoheme IX farnesyltransferase of Pseudarthrobacter chlorophenolicus (strain ATCC 700700 / DSM 12829 / CIP 107037 / JCM 12360 / KCTC 9906 / NCIMB 13794 / A6) (Arthrobacter chlorophenolicus).